Reading from the N-terminus, the 148-residue chain is Angiogenin-1 (148 aa).

The N-terminal stretch at Met-1–Pro-23 is a signal peptide. The active-site Proton acceptor is the His-37. Position 45 (Arg-45) interacts with tRNA. 3 cysteine pairs are disulfide-bonded: Cys-50–Cys-105, Cys-63–Cys-116, and Cys-81–Cys-131. The Nucleolar localization signal motif lies at Lys-55 to Leu-59. Positions 105 and 127 each coordinate tRNA. His-138 serves as the catalytic Proton donor.

Belongs to the pancreatic ribonuclease family. In terms of assembly, homodimer. Interacts with RNH1; inhibiting ANG ribonuclease activity. In terms of tissue distribution, serum and milk.

The protein resides in the secreted. Its subcellular location is the nucleus. The protein localises to the nucleolus. It is found in the cytoplasm. It localises to the stress granule. Secreted ribonuclease that can either promote or restrict cell proliferation of target cells, depending on the context. Endocytosed in target cells via its receptor PLXNB2 and translocates to the cytoplasm or nucleus. Under stress conditions, localizes to the cytoplasm and promotes the assembly of stress granules (SGs): specifically cleaves a subset of tRNAs within anticodon loops to produce tRNA-derived stress-induced fragments (tiRNAs), resulting in translation repression and inhibition of cell proliferation. tiRNas also prevent formation of apoptosome, thereby promoting cell survival. Preferentially cleaves RNAs between a pyrimidine and an adenosine residue, suggesting that it cleaves the anticodon loop of tRNA(Ala) (32-UUAGCAU-38) after positions 33 and 36. Cleaves a subset of tRNAs, including tRNA(Ala), tRNA(Glu), tRNA(Gly), tRNA(Lys), tRNA(Val), tRNA(His), tRNA(Asp) and tRNA(Sec). Under growth conditions and in differentiated cells, translocates to the nucleus and stimulates ribosomal RNA (rRNA) transcription, including that containing the initiation site sequences of 45S rRNA, thereby promoting cell growth and proliferation. Angiogenin induces vascularization of normal and malignant tissues via its ability to promote rRNA transcription. The sequence is that of Angiogenin-1 (ANG1) from Bos taurus (Bovine).